The chain runs to 285 residues: Transcription factor E2F6 (285 aa).

K9 is covalently cross-linked (Glycyl lysine isopeptide (Lys-Gly) (interchain with G-Cter in SUMO2)). A DNA-binding region spans residues Y50–S129. The DEF box signature appears at K95–S129. The segment at D130 to V222 is dimerization. Residues L143–C164 are leucine-zipper. Residues D173–N285 form a transcription repression region. Residues Q240–N285 are disordered. Residues G241–S259 show a composition bias toward polar residues. The segment covering K260 to N272 has biased composition (basic and acidic residues).

The protein belongs to the E2F/DP family. Forms heterodimers with DP family members TFDP1 or TFDP2. Component of the DRTF1/E2F transcription factor complex. Part of the E2F6.com-1 complex in G0 phase composed of E2F6, MGA, MAX, TFDP1, CBX3, BAT8, EUHMTASE1, RING1, RNF2, MBLR, L3MBTL2 and YAF2. Component of some MLL1/MLL complex, at least composed of the core components KMT2A/MLL1, ASH2L, HCFC1/HCF1, WDR5 and RBBP5, as well as the facultative components BACC1, CHD8, E2F6, HSP70, INO80C, KANSL1, LAS1L, MAX, MCRS1, MGA, KAT8/MOF, PELP1, PHF20, PRP31, RING2, RUVB1/TIP49A, RUVB2/TIP49B, SENP3, TAF1, TAF4, TAF6, TAF7, TAF9 and TEX10.

The protein resides in the nucleus. In terms of biological role, inhibitor of E2F-dependent transcription. Binds DNA cooperatively with DP proteins through the E2 recognition site, 5'-TTTC[CG]CGC-3'. Has a preference for the 5'-TTTCCCGC-3' E2F recognition site. E2F6 lacks the transcriptional activation and pocket protein binding domains. Appears to regulate a subset of E2F-dependent genes whose products are required for entry into the cell cycle but not for normal cell cycle progression. Represses expression of some meiosis-specific genes, including SLC25A31/ANT4. May silence expression via the recruitment of a chromatin remodeling complex containing histone H3-K9 methyltransferase activity. Overexpression delays the exit of cells from the S-phase. This is Transcription factor E2F6 from Bos taurus (Bovine).